The primary structure comprises 100 residues: MRVVAVREKKGNALFSVRVQPRASKTAVSGPYAGGLKITLKAAPVDDAANRECCRLFAGMFGIADGRVHVVSGRSSRSKSVMLEGVSSREAEEAFERFGL.

The protein belongs to the UPF0235 family.

The polypeptide is UPF0235 protein Cvib_0403 (Chlorobium phaeovibrioides (strain DSM 265 / 1930) (Prosthecochloris vibrioformis (strain DSM 265))).